The primary structure comprises 626 residues: Chaperone protein HtpG (626 aa).

Positions 1–341 (MAKKEFKAES…SEDLSLNISR (341 aa)) are a; substrate-binding. Positions 342–552 (EMLQHDRQLK…DGEVTIEMEK (211 aa)) are b. The segment at 553-626 (ILNAMPDSQN…FTNNICKVMV (74 aa)) is c.

It belongs to the heat shock protein 90 family. In terms of assembly, homodimer.

It is found in the cytoplasm. Molecular chaperone. Has ATPase activity. This is Chaperone protein HtpG from Bacillus subtilis (strain 168).